Reading from the N-terminus, the 1674-residue chain is E3 ubiquitin-protein ligase SHPRH (1674 aa).

The segment at 1–26 (MSSRRKRAPPMKVDEERQQQLHWNMH) is disordered. Residues 12–26 (KVDEERQQQLHWNMH) are compositionally biased toward basic and acidic residues. 2 positions are modified to phosphoserine: S259 and S261. Residues 302-384 (YQREAVNWML…TVEVLALILT (83 aa)) form the Helicase ATP-binding; first part domain. Residue 368–375 (DEMGLGKT) participates in ATP binding. The region spanning 433–507 (HCPPTRVMIL…GFSGTFTLGK (75 aa)) is the H15 domain. Residues 524 to 548 (SPRKIEKELRKSVNKDADSEYLPSN) form a disordered region. Over residues 526–541 (RKIEKELRKSVNKDAD) the composition is skewed to basic and acidic residues. A Phosphoserine modification is found at S626. A PHD-type zinc finger spans residues 649–700 (RFECICGEFDQIGHKPRVQCLKCHLWQHAKCVNYEEKNLKVKPFYCPHCLVA). Residues 701–859 (MEPVSTRATL…FGLVVFLGIE (159 aa)) form the Helicase ATP-binding; second part domain. A DEAQ box motif is present at residues 810 to 813 (DEAQ). Residues 1423–1470 (CPICARQLGKQWAVLTCGHCFCNECTSIIIEQYSVGSHRSSIKCAICR) form an RING-type zinc finger. A Helicase C-terminal domain is found at 1505-1663 (AVVRTLMKIQ…ASVLTVAGLA (159 aa)).

The protein belongs to the SNF2/RAD54 helicase family. In terms of assembly, homodimer. Interacts with HLTF, PCNA, UBE2N and RAD18. In terms of tissue distribution, broadly expressed (at protein level).

It carries out the reaction S-ubiquitinyl-[E2 ubiquitin-conjugating enzyme]-L-cysteine + [acceptor protein]-L-lysine = [E2 ubiquitin-conjugating enzyme]-L-cysteine + N(6)-ubiquitinyl-[acceptor protein]-L-lysine.. It functions in the pathway protein modification; protein ubiquitination. In terms of biological role, E3 ubiquitin-protein ligase involved in DNA repair. Upon genotoxic stress, accepts ubiquitin from the UBE2N-UBE2V2 E2 complex and transfers it to 'Lys-164' of PCNA which had been monoubiquitinated by UBE2A/B-RAD18, promoting the formation of non-canonical poly-ubiquitin chains linked through 'Lys-63'. This chain is E3 ubiquitin-protein ligase SHPRH (Shprh), found in Mus musculus (Mouse).